Reading from the N-terminus, the 283-residue chain is uncharacterized protein (283 aa).

A lipid anchor (N-myristoyl glycine; by host) is attached at G2. 6 N-linked (GlcNAc...) asparagine; by host glycosylation sites follow: N31, N95, N105, N108, N137, and N147. A run of 2 helical transmembrane segments spans residues 181–201 (IIAA…VVYF) and 250–270 (FIVL…LDIP). A glycan (N-linked (GlcNAc...) asparagine; by host) is linked at N277.

It localises to the membrane. This is an uncharacterized protein from Acanthamoeba polyphaga (Amoeba).